The following is a 499-amino-acid chain: Probable inactive receptor-like protein kinase At3g56050 (499 aa).

The N-terminal stretch at 1–31 (MSNNWKSVRLRLQNRTLVFLLVILSFGSCYS) is a signal peptide. An N-linked (GlcNAc...) asparagine glycan is attached at asparagine 14. The Extracellular segment spans residues 32 to 146 (LKSQGDGFLE…SKTSSNSTIP (115 aa)). The disordered stretch occupies residues 80–121 (RDRPVARATPPSSSVSTRPDAKRSSTLPPPQKSPPAQHVSAP). Asparagine 142 is a glycosylation site (N-linked (GlcNAc...) asparagine). The helical transmembrane segment at 147 to 167 (IVAGCIAGAVFILLLATGVFF) threads the bilayer. The Cytoplasmic portion of the chain corresponds to 168–499 (FKSKAGKSVN…WAELEVLSTA (332 aa)). Positions 208-474 (EDFSNVIGSC…EVTGRLREIT (267 aa)) constitute a Protein kinase domain.

The protein localises to the cell membrane. The polypeptide is Probable inactive receptor-like protein kinase At3g56050 (Arabidopsis thaliana (Mouse-ear cress)).